Reading from the N-terminus, the 457-residue chain is MSFDFIKNKKVHFIGIGGISMSALAEILLEKGFKVSGSDVKSSEATERLELKGAKVYIGQISQNITSDIDLVVYTAAISKNNEELLKAKDLNIPLMDRAEFLGEIMKGHKYNIAVSGTHGKTTTTSMLSSITLEANLDPTILVGGNLDIIGGNVRIGNSPFFITEACEYKESFLKFFPFIGIILNIDADHLDYYKDIEEIQNAFIKFGKLIPKEGYLVCCADDRRMEKIISNVNCNVMSYGIETGDITAKNICFDKEGRAFFEVYKSDKKLFSLNLSVPGEHNILNALASISVSLILNISVDNIINGLKSFKGTHRRFEIKGQRKGVVVIDDYAHHPTEIKATLNAAKNYPHKRIICVFQPHTFSRTISLFKEFTAAFDNVDELILSDIFPAREKDTGEISSSMLCEQIIKRGVKCRNIKDFDSIVQYLNNILTEGDVLLTIGAGDVFQVGELYLNQ.

ATP is bound at residue 117-123 (GTHGKTT).

The protein belongs to the MurCDEF family.

The protein localises to the cytoplasm. The enzyme catalyses UDP-N-acetyl-alpha-D-muramate + L-alanine + ATP = UDP-N-acetyl-alpha-D-muramoyl-L-alanine + ADP + phosphate + H(+). The protein operates within cell wall biogenesis; peptidoglycan biosynthesis. Functionally, cell wall formation. This chain is UDP-N-acetylmuramate--L-alanine ligase, found in Clostridium kluyveri (strain NBRC 12016).